The sequence spans 250 residues: 2,5-dichloro-2,5-cyclohexadiene-1,4-diol dehydrogenase (250 aa).

9–34 (IIVTGGGSGIGRATVELLVASGANVA) lines the NAD(+) pocket. Serine 141 is a substrate binding site. Tyrosine 154 functions as the Proton acceptor in the catalytic mechanism.

Belongs to the short-chain dehydrogenases/reductases (SDR) family.

The catalysed reaction is 2,5-dichlorocyclohexa-2,5-dien-1,4-diol + NAD(+) = 2,5-dichlorohydroquinone + NADH + H(+). Its pathway is xenobiotic degradation; gamma-hexachlorocyclohexane degradation. In terms of biological role, catalyzes the dehydrogenation of 2,5-dichloro-2,5-cyclohexadiene-1,4-diol (2,5-DDOL) to 2,5-dichlorohydroquinone (2,5-DCHQ), a step in the degradation of gamma-hexachlorocyclohexane (gamma-HCH or lindane). Has an essential role in this assimilation pathway that allows S.japonicum UT26 to grow on gamma-HCH as the sole source of carbon and energy. The chain is 2,5-dichloro-2,5-cyclohexadiene-1,4-diol dehydrogenase from Sphingobium indicum (strain DSM 16413 / CCM 7287 / MTCC 6362 / UT26 / NBRC 101211 / UT26S) (Sphingobium japonicum).